We begin with the raw amino-acid sequence, 234 residues long: Large ribosomal subunit protein uL1 (234 aa).

The protein belongs to the universal ribosomal protein uL1 family. In terms of assembly, part of the 50S ribosomal subunit.

Binds directly to 23S rRNA. The L1 stalk is quite mobile in the ribosome, and is involved in E site tRNA release. Functionally, protein L1 is also a translational repressor protein, it controls the translation of the L11 operon by binding to its mRNA. In Klebsiella pneumoniae (strain 342), this protein is Large ribosomal subunit protein uL1.